The following is a 1011-amino-acid chain: MSGSRNNRVMVEGVGARVARGPDWKWGKQDGGEGHVGTVRSFESPEEVVVVWDNGTAANYRCSGAYDLRIMDSAPTGIKHDGTMCDTCRQQPIIGIRWKCAECTNYDLCTVCYHGDKHHLRHRFYRITTPGSERVLLESRRKSKKITARGIFAGARVVRGVDWQWEDQDGGNGRRGKVTEIQDWSASSPHSAAYVLWDNGAKNLYRVGFEGMSDLKCVQDAKGGSFYRDHCPVLGEQNGNRNPGGLLIGDLVNIDLELEIVQSLQHGHGGWTDGMFETLTTTGTVCGIDEDHDIVVQYPSGNRWTFNPAVLTKANVVRSGDAAQGAEGGTSPFQVGDLVQICYDIERIKLLQRGHGEWAEAMLPTLGKVGRVQQIYSDNDLKVEVCGTSWTYNPAAVSRVASVGSAISNATGERLSQLLKKLFETQESGDLNEELVKAAANGDVAKVDDLLKRQDVDVNGQCAGHTAMQAASQNGHVDILKLLLKHSVDVEAEDKDGDRAVHHAAFGDEGTVIEVLQRGGADLNARNKRRQTPLHIAVNKGHLQVVKKLLDFSCHPSLQDSEGDTPLHDAISKKRDDILAVLLEAGADVTITNNNGFNALHHAALRGNPSAMRVLLSKLPRPWIVDEKKDDGYTALHLAALNNHVEVAELLVHQGSANLDIQNVNQQTALHLAVERQHTQIVRLLVRAEAKLDIQDKDGDTPLHEALRHHTLSQLRQLQDMQDVGKVDTTTWEPSKNTLIMGLGTQGAEKKSAASIACFLAANGADLAVRNKKGQSPLDLCPDPNLCKTLAKCHKEKSSGQVGSHSPSMINNDSETLEECMVCSDLKRDTLFGPCGHIATCSLCSPRVKKCLLCKEQVQSRTKIEECVVCSDKKAAVLFQPCGHMCACENCASLMKKCVQCRAVVERRVPFVMCCSGKGTEDVADDIAGGNIPALQKDKDNTNVNADVQKLQQQLQDIKEQTMCPVCLDRLKNMIFMCGHGTCQLCGDRMSECPICRKAIERRILLYSMSC.

The MIB/HERC2 1 domain occupies 6–74 (NNRVMVEGVG…AYDLRIMDSA (69 aa)). The ZZ-type zinc-finger motif lies at 80–132 (HDGTMCDTCRQQPIIGIRWKCAECTNYDLCTVCYHGDKHHLRHRFYRITTPGS). Zn(2+) contacts are provided by Cys-85, Cys-88, Cys-100, Cys-103, Cys-109, Cys-112, His-118, and His-122. Positions 143-221 (SKKITARGIF…MSDLKCVQDA (79 aa)) constitute an MIB/HERC2 2 domain. ANK repeat units follow at residues 430–460 (DLNE…DVNG), 463–492 (AGHT…DVEA), 496–525 (DGDR…DLNA), 529–558 (RRQT…HPSL), 562–591 (EGDT…DVTI), 595–627 (NGFN…IVDE), 631–661 (DGYT…NLDI), 665–694 (NQQT…KLDI), and 698–729 (DGDT…KVDT). RING-type zinc fingers lie at residues 820-855 (CMVC…LLCK) and 867-902 (CVVC…VQCR). Residues 936–963 (QKDKDNTNVNADVQKLQQQLQDIKEQTM) are a coiled coil. The RING-type 3 zinc-finger motif lies at 964 to 997 (CPVCLDRLKNMIFMCGHGTCQLCGDRMSECPICR).

The protein resides in the cytoplasm. The protein localises to the cytoskeleton. It localises to the microtubule organizing center. Its subcellular location is the centrosome. It is found in the centriolar satellite. It catalyses the reaction S-ubiquitinyl-[E2 ubiquitin-conjugating enzyme]-L-cysteine + [acceptor protein]-L-lysine = [E2 ubiquitin-conjugating enzyme]-L-cysteine + N(6)-ubiquitinyl-[acceptor protein]-L-lysine.. It functions in the pathway protein modification; protein ubiquitination. Functionally, E3 ubiquitin-protein ligase that mediates ubiquitination of Delta receptors, which act as ligands of Notch proteins. Positively regulates the Delta-mediated Notch signaling by ubiquitinating the intracellular domain of Delta, leading to endocytosis of Delta receptors. This Xenopus laevis (African clawed frog) protein is E3 ubiquitin-protein ligase mib1 (mib1).